The chain runs to 298 residues: 5'-AMP-activated protein kinase subunit beta (298 aa).

Residues 1–98 (MGNVQSQEGE…KTHQPYSGPC (98 aa)) form a disordered region. A compositionally biased stretch (polar residues) spans 19 to 30 (QDATTTPDNANN). The segment covering 48 to 59 (LNQEGEMSDDNQ) has biased composition (acidic residues). The segment covering 60-77 (QEGGNNRTSQNGTSGSSG) has biased composition (polar residues). The span at 78–91 (HTKRRSQTSGKKTH) shows a compositional bias: basic residues. 250–252 (DQS) provides a ligand contact to ADP.

Belongs to the 5'-AMP-activated protein kinase beta subunit family. In terms of assembly, AMPK is a heterotrimer of an alpha catalytic subunit (ssp2), a beta (amk2) and a gamma non-catalytic subunits (cbs2). The beta subunit serves as a bridge between the catalytic and the regulatory subunit.

The protein localises to the cytoplasm. In terms of biological role, beta subunit of AMP-activated protein kinase (AMPK), which is required for transcriptional, metabolic, and developmental adaptations in response to glucose limitation. Has a structural role, mediating heterotrimer formation, and a regulatory role, defining carbon source-regulated subcellular location and substrate specificity of the AMPK kinase complex. This chain is 5'-AMP-activated protein kinase subunit beta (amk2), found in Schizosaccharomyces pombe (strain 972 / ATCC 24843) (Fission yeast).